The chain runs to 316 residues: IDS-like terpene synthase 2 (316 aa).

D69 and D73 together coordinate Mg(2+).

The protein belongs to the FPP/GGPP synthase family. Mg(2+) is required as a cofactor.

The enzyme catalyses (2E)-geranyl diphosphate + H2O = linalool + diphosphate. It carries out the reaction (2E,6E)-farnesyl diphosphate + H2O = (6E)-nerolidol + diphosphate. Terpene synthase that shows monoterpene synthase activity and produces linalool, using geranyl diphosphate (GPP) as substrate. Also shows sesquiterpene synthase activity as it is able to convert farnesyl diphosphate (FPP) into (E)-nerolidol. This Melampsora larici-populina (strain 98AG31 / pathotype 3-4-7) (Poplar leaf rust fungus) protein is IDS-like terpene synthase 2.